We begin with the raw amino-acid sequence, 221 residues long: uncharacterized protein (221 aa).

6 helical membrane-spanning segments follow: residues 33–55 (YFLL…ISYI), 70–92 (FGYR…QKIV), 99–121 (LEML…FIII), 125–147 (YGAY…YTLL), 154–176 (YFND…SFWI), and 186–208 (IISM…ITLI).

The protein resides in the cell membrane. This is an uncharacterized protein from Aquifex aeolicus (strain VF5).